We begin with the raw amino-acid sequence, 261 residues long: tRNA pseudouridine synthase A (261 aa).

Asp51 functions as the Nucleophile in the catalytic mechanism. Tyr109 is a binding site for substrate.

The protein belongs to the tRNA pseudouridine synthase TruA family. As to quaternary structure, homodimer.

The catalysed reaction is uridine(38/39/40) in tRNA = pseudouridine(38/39/40) in tRNA. Functionally, formation of pseudouridine at positions 38, 39 and 40 in the anticodon stem and loop of transfer RNAs. The sequence is that of tRNA pseudouridine synthase A from Shewanella sp. (strain ANA-3).